The primary structure comprises 92 residues: Acylphosphatase (92 aa).

Residues Ala-5–Tyr-92 form the Acylphosphatase-like domain. Catalysis depends on residues Arg-20 and Asn-38.

Belongs to the acylphosphatase family.

The catalysed reaction is an acyl phosphate + H2O = a carboxylate + phosphate + H(+). The sequence is that of Acylphosphatase (acyP) from Pectobacterium atrosepticum (strain SCRI 1043 / ATCC BAA-672) (Erwinia carotovora subsp. atroseptica).